We begin with the raw amino-acid sequence, 344 residues long: Aurora kinase B (344 aa).

T35 carries the phosphothreonine modification. A disordered region spans residues 46–65 (NAQPTAAPGQKVVENSSGTP). S62 bears the Phosphoserine mark. Phosphothreonine is present on T64. The region spanning 77-327 (FEIGRPLGKG…LAQVSAHPWV (251 aa)) is the Protein kinase domain. ATP-binding positions include 83 to 91 (LGKGKFGNV) and K106. The Proton acceptor role is filled by D200. Residue K215 is modified to N6-acetyllysine. Residue S227 is modified to Phosphoserine. T232 is subject to Phosphothreonine; by autocatalysis.

It belongs to the protein kinase superfamily. Ser/Thr protein kinase family. Aurora subfamily. Component of the chromosomal passenger complex (CPC) composed of at least BIRC5/survivin, CDCA8/borealin, INCENP, AURKB or AURKC; predominantly independent AURKB- and AURKC-containing complexes exist. Associates with RACGAP1 during M phase. Interacts with SPDYC; this interaction may be required for proper localization of active, Thr-232-phosphorylated AURKB form during prometaphase and metaphase. Interacts with p53/TP53. Interacts (via the middle kinase domain) with NOC2L (via the N- and C-terminus domains). Interacts with CDCA1. Interacts with EVI5. Interacts with JTB. Interacts with NDC80. Interacts with PSMA3. Interacts with RNF2/RING1B. Interacts with SEPTIN1. Interacts with SIRT2. Interacts with TACC1. Interacts with TTC28. Post-translationally, the phosphorylation of Thr-232 requires the binding to INCENP and occurs by means of an autophosphorylation mechanism. Thr-232 phosphorylation is indispensable for the AURKB kinase activity. Acetylated at Lys-215 by KAT5 at kinetochores, increasing AURKB activity and promoting accurate chromosome segregation in mitosis. In terms of processing, ubiquitinated by different BCR (BTB-CUL3-RBX1) E3 ubiquitin ligase complexes. Ubiquitinated by the BCR(KLHL9-KLHL13) E3 ubiquitin ligase complex, ubiquitination leads to removal from mitotic chromosomes and is required for cytokinesis. During anaphase, the BCR(KLHL21) E3 ubiquitin ligase complex recruits the CPC complex from chromosomes to the spindle midzone and mediates the ubiquitination of AURKB. Ubiquitination of AURKB by BCR(KLHL21) E3 ubiquitin ligase complex may not lead to its degradation by the proteasome. Deubiquitinated by USP35; inhibiting CDH1-mediated degradation of AURKB.

It is found in the nucleus. It localises to the chromosome. Its subcellular location is the centromere. The protein resides in the kinetochore. The protein localises to the cytoplasm. It is found in the cytoskeleton. It localises to the spindle. Its subcellular location is the midbody. It carries out the reaction L-seryl-[protein] + ATP = O-phospho-L-seryl-[protein] + ADP + H(+). It catalyses the reaction L-threonyl-[protein] + ATP = O-phospho-L-threonyl-[protein] + ADP + H(+). With respect to regulation, activity is greatly increased when AURKB is within the CPC complex. In particular, AURKB-phosphorylated INCENP acts as an activator of AURKB. Positive feedback between HASPIN and AURKB contributes to CPC localization. Functionally, serine/threonine-protein kinase component of the chromosomal passenger complex (CPC), a complex that acts as a key regulator of mitosis. The CPC complex has essential functions at the centromere in ensuring correct chromosome alignment and segregation and is required for chromatin-induced microtubule stabilization and spindle assembly. Involved in the bipolar attachment of spindle microtubules to kinetochores and is a key regulator for the onset of cytokinesis during mitosis. Required for central/midzone spindle assembly and cleavage furrow formation. Key component of the cytokinesis checkpoint, a process required to delay abscission to prevent both premature resolution of intercellular chromosome bridges and accumulation of DNA damage: phosphorylates CHMP4C, leading to retain abscission-competent VPS4 (VPS4A and/or VPS4B) at the midbody ring until abscission checkpoint signaling is terminated at late cytokinesis. AURKB phosphorylates the CPC complex subunits BIRC5/survivin, CDCA8/borealin and INCENP. Phosphorylation of INCENP leads to increased AURKB activity. Other known AURKB substrates involved in centromeric functions and mitosis are CENPA, DES/desmin, GPAF, KIF2C, NSUN2, RACGAP1, SEPTIN1, VIM/vimentin, HASPIN, and histone H3. A positive feedback loop involving HASPIN and AURKB contributes to localization of CPC to centromeres. Phosphorylation of VIM controls vimentin filament segregation in cytokinetic process, whereas histone H3 is phosphorylated at 'Ser-10' and 'Ser-28' during mitosis (H3S10ph and H3S28ph, respectively). AURKB is also required for kinetochore localization of BUB1 and SGO1. Phosphorylation of p53/TP53 negatively regulates its transcriptional activity. Key regulator of active promoters in resting B- and T-lymphocytes: acts by mediating phosphorylation of H3S28ph at active promoters in resting B-cells, inhibiting RNF2/RING1B-mediated ubiquitination of histone H2A and enhancing binding and activity of the USP16 deubiquitinase at transcribed genes. Acts as an inhibitor of CGAS during mitosis: catalyzes phosphorylation of the N-terminus of CGAS during the G2-M transition, blocking CGAS liquid phase separation and activation, and thereby preventing CGAS-induced autoimmunity. Phosphorylates KRT5 during anaphase and telophase. Phosphorylates ATXN10 which promotes phosphorylation of ATXN10 by PLK1 and may play a role in the regulation of cytokinesis and stimulating the proteasomal degradation of ATXN10. This is Aurora kinase B (AURKB) from Bos taurus (Bovine).